The chain runs to 104 residues: Large ribosomal subunit protein uL23 (104 aa).

It belongs to the universal ribosomal protein uL23 family. In terms of assembly, part of the 50S ribosomal subunit. Contacts protein L29, and trigger factor when it is bound to the ribosome.

Its function is as follows. One of the early assembly proteins it binds 23S rRNA. One of the proteins that surrounds the polypeptide exit tunnel on the outside of the ribosome. Forms the main docking site for trigger factor binding to the ribosome. This is Large ribosomal subunit protein uL23 from Neisseria meningitidis serogroup B (strain ATCC BAA-335 / MC58).